The primary structure comprises 410 residues: Putative ankyrin repeat protein FPV240 (410 aa).

ANK repeat units lie at residues 33–62 (NGYS…YPDY), 66–95 (DIES…FIND), 100–129 (KGNT…DTDV), 133–162 (DRFT…CTNI), 166–195 (YGCT…NIDY), and 200–229 (PCVT…DSNI).

The sequence is that of Putative ankyrin repeat protein FPV240 from Vertebrata (FPV).